The following is a 241-amino-acid chain: uncharacterized protein (241 aa).

The Cupin type-2 domain occupies 22-78 (SHKHAYSQFLFPLEGSIDLETEGRQVKLNPDHFLYIPPQCEHRFRSIGRNECLVLDV). An HTH araC/xylS-type domain is found at 137–235 (YASIAYIHSH…GMPPRLYRNT (99 aa)). 2 consecutive DNA-binding regions (H-T-H motif) follow at residues 154–175 (KKLAEIEHYHPAYYSSWFKKQT) and 202–225 (LTVVSEALGFQNLSSFTRWFTKST).

This is an uncharacterized protein from Bacillus subtilis (strain 168).